The primary structure comprises 149 residues: Large ribosomal subunit protein bL9 (149 aa).

This sequence belongs to the bacterial ribosomal protein bL9 family.

Its function is as follows. Binds to the 23S rRNA. The protein is Large ribosomal subunit protein bL9 of Helicobacter pylori (strain J99 / ATCC 700824) (Campylobacter pylori J99).